The sequence spans 86 residues: Small ribosomal subunit protein bS20 (86 aa).

Residues 1–11 (MANIKSQIKRN) show a composition bias toward polar residues. Residues 1–20 (MANIKSQIKRNLTNEKRHQA) are disordered.

The protein belongs to the bacterial ribosomal protein bS20 family.

Binds directly to 16S ribosomal RNA. The polypeptide is Small ribosomal subunit protein bS20 (Acholeplasma laidlawii (strain PG-8A)).